A 346-amino-acid chain; its full sequence is Peripherin-2 (346 aa).

The Cytoplasmic segment spans residues 1–24 (MALLKVKFDQKKRVKLAQGLWLMN). A helical membrane pass occupies residues 25-43 (WLSVLAGIVIFSLGLFLKI). Residues 44 to 61 (ELRKRSDVMNNSESHFVP) are Lumenal-facing. An N-linked (GlcNAc...) asparagine glycan is attached at N53. Residues 62 to 80 (NSLIVMGVLSCVFNSLAGK) form a helical membrane-spanning segment. Topologically, residues 81-99 (ICYDALDPAKYAKWKPWLK) are cytoplasmic. The helical transmembrane segment at 100-123 (PYLAVCVLFNIALFLVTLCCFLMR) threads the bilayer. Over 124-264 (GSLESTLAHG…LSYYSSLMNS (141 aa)) the chain is Lumenal. N-linked (GlcNAc...) asparagine glycosylation is present at N229. Residues 265 to 290 (MGAVTLLVWLFEVTITIGLRYLHTAL) form a helical membrane-spanning segment. The Cytoplasmic portion of the chain corresponds to 291–346 (EGVSNPEDPECESEGWLLEKSVSETWKAFLESLKKLGKSNQVEAEGADAGQAPEAG). The interval 341 to 346 (QAPEAG) is interaction with MREG.

Belongs to the PRPH2/ROM1 family. Homodimer; disulfide-linked. Forms a homotetramer. Forms a heterotetramer with ROM1. Homotetramer and heterotetramer core complexes go on to form higher order complexes by formation of intermolecular disulfide bonds. Interacts with MREG. Interacts with STX3. Interacts with SNAP25. Retina (photoreceptor). In rim region of ROS (rod outer segment) disks.

It is found in the membrane. The protein localises to the cell projection. Its subcellular location is the cilium. The protein resides in the photoreceptor outer segment. It localises to the photoreceptor inner segment. Functionally, essential for retina photoreceptor outer segment disk morphogenesis, may also play a role with ROM1 in the maintenance of outer segment disk structure. Required for the maintenance of retinal outer nuclear layer thickness. Required for the correct development and organization of the photoreceptor inner segment. The polypeptide is Peripherin-2 (PRPH2) (Canis lupus familiaris (Dog)).